The sequence spans 332 residues: 4-hydroxyproline 2-epimerase 2 (332 aa).

Cys-89 serves as the catalytic Proton acceptor. Substrate-binding positions include His-222, Asp-248, and 253–254 (GT).

The protein belongs to the proline racemase family.

The catalysed reaction is trans-4-hydroxy-L-proline = cis-4-hydroxy-D-proline. Its function is as follows. Catalyzes the epimerization of trans-4-hydroxy-L-proline (t4LHyp) to cis-4-hydroxy-D-proline (c4DHyp). Is likely involved in a degradation pathway that converts t4LHyp to alpha-ketoglutarate. Displays no proline racemase activity. This chain is 4-hydroxyproline 2-epimerase 2, found in Rhizobium rhizogenes (strain K84 / ATCC BAA-868) (Agrobacterium radiobacter).